Here is a 187-residue protein sequence, read N- to C-terminus: MGIDIERHHVRKSQRSKPASENVYLKLLVKLYRFLARRTDSRFNKAILKRLFQSKTNRPPISISKIAALTSRKSASLEGKTTVIVGTVTDDERLLTVPKLSVAALRFTKSARARILKAGGEVLTLDQLALRAPTGSNTVLLRGKKHAREAYRHFGFGPHKHKAPYVRSEGRKFERARGRRKSRAFKV.

Position 134 is a phosphothreonine (threonine 134). Position 136 is a phosphoserine (serine 136).

Belongs to the eukaryotic ribosomal protein eL18 family. As to quaternary structure, component of the large ribosomal subunit (LSU). Mature yeast ribosomes consist of a small (40S) and a large (60S) subunit. The 40S small subunit contains 1 molecule of ribosomal RNA (18S rRNA) and at least 33 different proteins. The large 60S subunit contains 3 rRNA molecules (25S, 5.8S and 5S rRNA) and at least 46 different proteins. eL18 interacts with NAP1.

The protein localises to the cytoplasm. Functionally, component of the ribosome, a large ribonucleoprotein complex responsible for the synthesis of proteins in the cell. The small ribosomal subunit (SSU) binds messenger RNAs (mRNAs) and translates the encoded message by selecting cognate aminoacyl-transfer RNA (tRNA) molecules. The large subunit (LSU) contains the ribosomal catalytic site termed the peptidyl transferase center (PTC), which catalyzes the formation of peptide bonds, thereby polymerizing the amino acids delivered by tRNAs into a polypeptide chain. The nascent polypeptides leave the ribosome through a tunnel in the LSU and interact with protein factors that function in enzymatic processing, targeting, and the membrane insertion of nascent chains at the exit of the ribosomal tunnel. The polypeptide is Large ribosomal subunit protein eL18B (rpl1802) (Schizosaccharomyces pombe (strain 972 / ATCC 24843) (Fission yeast)).